A 465-amino-acid chain; its full sequence is MQLDKKIINHVHCLGIGGIGVSALAEILLKKGCRVTGSDVSPNKNTERLQRLGAEIIFNHDGTAITQADCAVYSSAIGATNPELMAAKQAKIPLLKRGEMLANLMKEYQSIAVAGAHGKTTTSGMLSHAFVEANLDPTFMVGGVLNNSQTPARVGNGHYFIAEADESDASFLFMHPDIAVVTNIDADHLSTYDGDFNRLKQTYIQFLEQTAQDGVVVLCLDDPILREIAPLLSRRVITYGFSSDAQYRVVDYCQQGIQSLFQIHSPQRKAPLTVKLSMPGQHNALNATAVTAIADVVRMNEPALLKSLADFPGVDRRFTIRGEMILPKGNALIIEDYGHHPNEIKATLAAARAAWPERRMVLVFQPHRYSRTRDLMTEFVSVLAETDWLVLLEVYSAGEMPIPGADGMALIKMMSNGMAQKTTFVPLLQNLPETLQKLSQPNDIIILQGAGNIGSIVTALVQTHG.

Residue 115 to 121 (GAHGKTT) coordinates ATP.

It belongs to the MurCDEF family.

It is found in the cytoplasm. It carries out the reaction UDP-N-acetyl-alpha-D-muramate + L-alanine + ATP = UDP-N-acetyl-alpha-D-muramoyl-L-alanine + ADP + phosphate + H(+). Its pathway is cell wall biogenesis; peptidoglycan biosynthesis. Functionally, cell wall formation. In Coxiella burnetii (strain CbuK_Q154) (Coxiella burnetii (strain Q154)), this protein is UDP-N-acetylmuramate--L-alanine ligase.